We begin with the raw amino-acid sequence, 633 residues long: Threonine--tRNA ligase (633 aa).

Residues 1-61 enclose the TGS domain; sequence MINIHFSNNL…IENCTFEVIT (61 aa). Positions 242–533 are catalytic; the sequence is DHRKIGRELE…LIEHHSGKFP (292 aa). Positions 333, 384, and 510 each coordinate Zn(2+).

It belongs to the class-II aminoacyl-tRNA synthetase family. In terms of assembly, homodimer. Requires Zn(2+) as cofactor.

It localises to the cytoplasm. The enzyme catalyses tRNA(Thr) + L-threonine + ATP = L-threonyl-tRNA(Thr) + AMP + diphosphate + H(+). Functionally, catalyzes the attachment of threonine to tRNA(Thr) in a two-step reaction: L-threonine is first activated by ATP to form Thr-AMP and then transferred to the acceptor end of tRNA(Thr). Also edits incorrectly charged L-seryl-tRNA(Thr). The sequence is that of Threonine--tRNA ligase from Ehrlichia chaffeensis (strain ATCC CRL-10679 / Arkansas).